Consider the following 223-residue polypeptide: Membrane protein (223 aa).

Residues 1–18 are Virion surface-facing; that stretch reads MAENCTLDSEQAVLLFKE. Residues 19–39 traverse the membrane as a helical segment; it reads YNLFITAFLLFLTILLQYGYA. Residues 40 to 49 lie on the Intravirion side of the membrane; sequence TRSRTIYILK. The chain crosses the membrane as a helical span at residues 50–70; the sequence is MIVLWCFWPLNIAVGVISCIY. Topologically, residues 71-75 are virion surface; it reads PPNTG. The helical transmembrane segment at 76–96 threads the bilayer; sequence GLVAAIILTVFACLSFVGYWI. Residues 97 to 223 lie on the Intravirion side of the membrane; that stretch reads QSCRLFKRCR…VATGGSSLYT (127 aa).

Belongs to the gammacoronaviruses M protein family. In terms of assembly, homomultimer. Interacts with envelope E protein in the budding compartment of the host cell, which is located between endoplasmic reticulum and the Golgi complex. Forms a complex with HE and S proteins. Interacts with nucleocapsid N protein. This interaction probably participates in RNA packaging into the virus.

The protein resides in the virion membrane. It localises to the host Golgi apparatus membrane. In terms of biological role, component of the viral envelope that plays a central role in virus morphogenesis and assembly via its interactions with other viral proteins. In Gallus gallus (Chicken), this protein is Membrane protein.